A 156-amino-acid chain; its full sequence is Arginine repressor (156 aa).

It belongs to the ArgR family.

The protein resides in the cytoplasm. Its pathway is amino-acid biosynthesis; L-arginine biosynthesis [regulation]. Regulates arginine biosynthesis genes. This is Arginine repressor from Shewanella piezotolerans (strain WP3 / JCM 13877).